We begin with the raw amino-acid sequence, 181 residues long: Ribonuclease HII (181 aa).

Residues Met1–Ile181 enclose the RNase H type-2 domain. 3 residues coordinate a divalent metal cation: Asp6, Glu7, and Asp98.

Belongs to the RNase HII family. Mn(2+) is required as a cofactor. Requires Mg(2+) as cofactor.

The protein localises to the cytoplasm. The enzyme catalyses Endonucleolytic cleavage to 5'-phosphomonoester.. In terms of biological role, endonuclease that specifically degrades the RNA of RNA-DNA hybrids. The protein is Ribonuclease HII of Borrelia hermsii (strain HS1 / DAH).